The following is a 480-amino-acid chain: Glutamate--tRNA ligase 2 (480 aa).

Positions 15-25 match the 'HIGH' region motif; that stretch reads PSPTGYLHVGG. The short motif at 248–252 is the 'KMSKS' region element; sequence RLSKR. Lysine 251 contacts ATP.

Belongs to the class-I aminoacyl-tRNA synthetase family. Glutamate--tRNA ligase type 1 subfamily. As to quaternary structure, monomer.

It is found in the cytoplasm. The enzyme catalyses tRNA(Glu) + L-glutamate + ATP = L-glutamyl-tRNA(Glu) + AMP + diphosphate. In terms of biological role, catalyzes the attachment of glutamate to tRNA(Glu) in a two-step reaction: glutamate is first activated by ATP to form Glu-AMP and then transferred to the acceptor end of tRNA(Glu). The polypeptide is Glutamate--tRNA ligase 2 (Koribacter versatilis (strain Ellin345)).